Here is a 219-residue protein sequence, read N- to C-terminus: Small ribosomal subunit protein uS3c (219 aa).

A KH type-2 domain is found at 43 to 118 (IKNYVQKNMK…KLNIAITRIA (76 aa)).

This sequence belongs to the universal ribosomal protein uS3 family. As to quaternary structure, part of the 30S ribosomal subunit.

Its subcellular location is the plastid. It localises to the chloroplast. In Panax ginseng (Korean ginseng), this protein is Small ribosomal subunit protein uS3c (rps3).